The chain runs to 2357 residues: Protein transport protein Sec16A (2357 aa).

Disordered stretches follow at residues 1 to 25 (MQPPPQTVPSGMAGPPPAGNPRSVF) and 57 to 303 (FSRQ…STFR). Low complexity-rich tracts occupy residues 64-76 (STPLGSSSKSSPP) and 210-227 (QMPGQWGPVQGGPQPSGQ). The span at 285-303 (HLQSGSHLANNSDPESTFR) shows a compositional bias: polar residues. Phosphoserine occurs at positions 296, 314, and 331. 7 disordered regions span residues 335–359 (NPLARGDSPENRTHHPLGAGAGSGC), 508–540 (APDATLHTVHPDSVSSSYSSRSHGRLSGSARPQ), 553–603 (KPED…TGIF), 758–828 (VQPP…NPPV), 924–987 (LLVQ…SSHQ), 1006–1038 (VNVYNPSHSDSLASQQSVASHPRQSGPGAPNLD), and 1059–1151 (QELV…APGP). Residues 520 to 536 (SVSSSYSSRSHGRLSGS) show a composition bias toward low complexity. Residues Ser-559, Ser-569, Ser-587, Ser-589, and Ser-592 each carry the phosphoserine modification. Phosphothreonine is present on Thr-593. Ser-595 bears the Phosphoserine mark. 2 stretches are compositionally biased toward polar residues: residues 766-778 (SGQQSRNPSSAAP) and 803-825 (LQSQASSGYASLLSSPPTESLQN). Polar residues predominate over residues 1006–1028 (VNVYNPSHSDSLASQQSVASHPR). The tract at residues 1019–1890 (SQQSVASHPR…QQVERQIKEG (872 aa)) is required for localization to endoplasmic reticulum exit sites. Ser-1069 bears the Phosphoserine mark. Positions 1080–1101 (ELSNPESLPAQGQAQNSAQSPA) are enriched in polar residues. Residues 1101–1400 (ASLVLVDAGQ…EAPLPPGSFH (300 aa)) are interaction with MIA3. Residues 1102–1405 (SLVLVDAGQQ…PGSFHGDFAY (304 aa)) are required for endoplasmic reticulum localization. A compositionally biased stretch (low complexity) spans 1118 to 1131 (QSSSVSLVSSGSGQ). Residues 1138–1151 (QPWPQPVPALAPGP) are compositionally biased toward pro residues. Phosphoserine occurs at positions 1207, 1229, and 1305. Residues 1215–1248 (YPEPERPSSRASHSSERPPPRQGYPEGYYSSKSG) form a disordered region. Positions 1216–1233 (PEPERPSSRASHSSERPP) are enriched in basic and acidic residues. A compositionally biased stretch (basic and acidic residues) spans 1307 to 1322 (FGDRPEKRDNNWRYDP). Residues 1307–1378 (FGDRPEKRDN…SLSSHSHQSQ (72 aa)) are disordered. Thr-1325 is modified (phosphothreonine). Ser-1327, Ser-1347, Ser-1350, Ser-1356, Ser-1359, Ser-1362, Ser-1369, Ser-1573, and Ser-1601 each carry phosphoserine. The span at 1333-1354 (DPHRDPYGEEVDRRSVHSEHSA) shows a compositional bias: basic and acidic residues. Low complexity predominate over residues 1356–1375 (SLHSAHSLASRRSSLSSHSH). The central conserved domain (CCD); mediates interaction with RNF183, LRRK2 and SEC13 stretch occupies residues 1434–1890 (QVSSRPTSPE…QQVERQIKEG (457 aa)). Thr-1907 is subject to Phosphothreonine. Phosphoserine occurs at positions 1939, 1964, 2022, and 2042. 3 disordered regions span residues 2049–2110 (KFAN…SWFF), 2141–2181 (VNLN…PVNM), and 2226–2328 (NLFV…MPFY). Thr-2054 carries the post-translational modification Phosphothreonine. A phosphoserine mark is found at Ser-2056, Ser-2073, and Ser-2083. Basic and acidic residues predominate over residues 2087–2106 (ETKRPGQAAKKETKEPKKGE). The segment at 2106 to 2357 (ESWFFRWLPG…IGQRKHLVLN (252 aa)) is required for interaction with SEC23A. A phosphoserine mark is found at Ser-2271 and Ser-2291. 2 stretches are compositionally biased toward low complexity: residues 2289–2302 (ELSRCSSMSSLSRE) and 2310–2324 (APGDLPAAGGPPSGA).

The protein belongs to the SEC16 family. SEC16A and SEC16B are each present in multiple copies in a heteromeric complex. Interacts with SEC23A. Interacts with RNF183 and RNF152. Interacts with LRRK2 (via ROC domain). Interacts with SEC13. Interacts with RAB10. Interacts with MIA3. Interacts with GORASP2 in response to ER stress. Ubiquitous. Expressed at higher levels in the pancreas.

It is found in the endoplasmic reticulum membrane. The protein resides in the golgi apparatus membrane. It localises to the cytoplasm. The protein localises to the perinuclear region. Its subcellular location is the cytosol. It is found in the microsome membrane. In terms of biological role, acts as a molecular scaffold that plays a key role in the organization of the endoplasmic reticulum exit sites (ERES), also known as transitional endoplasmic reticulum (tER). SAR1A-GTP-dependent assembly of SEC16A on the ER membrane forms an organized scaffold defining an ERES. Required for secretory cargo traffic from the endoplasmic reticulum to the Golgi apparatus. Mediates the recruitment of MIA3/TANGO to ERES. Regulates both conventional (ER/Golgi-dependent) and GORASP2-mediated unconventional (ER/Golgi-independent) trafficking of CFTR to cell membrane. Positively regulates the protein stability of E3 ubiquitin-protein ligases RNF152 and RNF183 and the ER localization of RNF183. Acts as a RAB10 effector in the regulation of insulin-induced SLC2A4/GLUT4 glucose transporter-enriched vesicles delivery to the cell membrane in adipocytes. This is Protein transport protein Sec16A (SEC16A) from Homo sapiens (Human).